A 287-amino-acid chain; its full sequence is 2-dehydro-3-deoxyphosphooctonate aldolase (287 aa).

Belongs to the KdsA family.

Its subcellular location is the cytoplasm. The catalysed reaction is D-arabinose 5-phosphate + phosphoenolpyruvate + H2O = 3-deoxy-alpha-D-manno-2-octulosonate-8-phosphate + phosphate. It participates in carbohydrate biosynthesis; 3-deoxy-D-manno-octulosonate biosynthesis; 3-deoxy-D-manno-octulosonate from D-ribulose 5-phosphate: step 2/3. It functions in the pathway bacterial outer membrane biogenesis; lipopolysaccharide biosynthesis. This Nitrobacter winogradskyi (strain ATCC 25391 / DSM 10237 / CIP 104748 / NCIMB 11846 / Nb-255) protein is 2-dehydro-3-deoxyphosphooctonate aldolase.